We begin with the raw amino-acid sequence, 279 residues long: tRNA (carboxymethyluridine(34)-5-O)-methyltransferase (279 aa).

A disordered region spans residues 172-236; that stretch reads KSKSKPKTKS…QQQDQEQERE (65 aa). The span at 200–229 shows a compositional bias: basic and acidic residues; the sequence is PKERSEYLQRWKEEQQRSKSLDDNDEKQQQ.

As to quaternary structure, interacts with TRM112.

It localises to the cytoplasm. The protein resides in the nucleus. It catalyses the reaction 5-(carboxymethyl)uridine(34) in tRNA + S-adenosyl-L-methionine = 5-(2-methoxy-2-oxoethyl)uridine(34) in tRNA + S-adenosyl-L-homocysteine. In terms of biological role, required for the methylation of the wobble bases at position 34 in tRNA. Appears to have a role in stress-response. The sequence is that of tRNA (carboxymethyluridine(34)-5-O)-methyltransferase (TRM9) from Saccharomyces cerevisiae (strain ATCC 204508 / S288c) (Baker's yeast).